A 301-amino-acid chain; its full sequence is Acetylglutamate kinase (301 aa).

Substrate contacts are provided by residues 68-69, Arg90, and Asn197; that span reads GG.

Belongs to the acetylglutamate kinase family. ArgB subfamily.

It is found in the cytoplasm. It carries out the reaction N-acetyl-L-glutamate + ATP = N-acetyl-L-glutamyl 5-phosphate + ADP. It functions in the pathway amino-acid biosynthesis; L-arginine biosynthesis; N(2)-acetyl-L-ornithine from L-glutamate: step 2/4. Its function is as follows. Catalyzes the ATP-dependent phosphorylation of N-acetyl-L-glutamate. The polypeptide is Acetylglutamate kinase (Nitrosococcus oceani (strain ATCC 19707 / BCRC 17464 / JCM 30415 / NCIMB 11848 / C-107)).